A 260-amino-acid polypeptide reads, in one-letter code: Phosphatidate cytidylyltransferase (260 aa).

7 helical membrane passes run 9–29 (IIALIVFLPVLLKGGLILMLF), 46–66 (MIKFLSIPGIISALGILIIML), 70–90 (AGSWVNDLQLKSLIAMSFILL), 102–122 (FMDAAFCLMSIAYVGIGFMYL), 130–150 (LHYILFAFLVVWLTDTGAYIF), 172–192 (FVGGLICSLIVPLVMMIFVDF), and 196–216 (LWLLLIITIILSMFGQLGDLV).

The protein belongs to the CDS family.

It localises to the cell membrane. It carries out the reaction a 1,2-diacyl-sn-glycero-3-phosphate + CTP + H(+) = a CDP-1,2-diacyl-sn-glycerol + diphosphate. Its pathway is phospholipid metabolism; CDP-diacylglycerol biosynthesis; CDP-diacylglycerol from sn-glycerol 3-phosphate: step 3/3. The polypeptide is Phosphatidate cytidylyltransferase (cdsA) (Staphylococcus saprophyticus subsp. saprophyticus (strain ATCC 15305 / DSM 20229 / NCIMB 8711 / NCTC 7292 / S-41)).